The primary structure comprises 195 residues: Morphogenetic protein (195 aa).

Functionally, assembly factor active in membrane morphogenesis. The protein is Morphogenetic protein (P12) of Pseudomonas phage phi6 (Bacteriophage phi-6).